Here is a 304-residue protein sequence, read N- to C-terminus: Acetyl-coenzyme A carboxylase carboxyl transferase subunit beta (304 aa).

Positions 26–295 constitute a CoA carboxyltransferase N-terminal domain; it reads VWTKCTSCEQ…PFVEPELVEN (270 aa). Residues C30, C33, C49, and C52 each coordinate Zn(2+). A C4-type zinc finger spans residues 30-52; that stretch reads CTSCEQVLYRDELRRHLEVCPKC. The disordered stretch occupies residues 281 to 304; the sequence is SNKPSPFVEPELVENEEQSKSDNE.

The protein belongs to the AccD/PCCB family. In terms of assembly, acetyl-CoA carboxylase is a heterohexamer composed of biotin carboxyl carrier protein (AccB), biotin carboxylase (AccC) and two subunits each of ACCase subunit alpha (AccA) and ACCase subunit beta (AccD). Requires Zn(2+) as cofactor.

It localises to the cytoplasm. It catalyses the reaction N(6)-carboxybiotinyl-L-lysyl-[protein] + acetyl-CoA = N(6)-biotinyl-L-lysyl-[protein] + malonyl-CoA. It participates in lipid metabolism; malonyl-CoA biosynthesis; malonyl-CoA from acetyl-CoA: step 1/1. Its function is as follows. Component of the acetyl coenzyme A carboxylase (ACC) complex. Biotin carboxylase (BC) catalyzes the carboxylation of biotin on its carrier protein (BCCP) and then the CO(2) group is transferred by the transcarboxylase to acetyl-CoA to form malonyl-CoA. This is Acetyl-coenzyme A carboxylase carboxyl transferase subunit beta from Pasteurella multocida (strain Pm70).